The following is a 140-amino-acid chain: Nucleoside diphosphate kinase (140 aa).

Lys11, Phe59, Arg87, Thr93, Arg104, and Asn114 together coordinate ATP. Residue His117 is the Pros-phosphohistidine intermediate of the active site.

The protein belongs to the NDK family. In terms of assembly, homotetramer. It depends on Mg(2+) as a cofactor.

The protein resides in the cytoplasm. It catalyses the reaction a 2'-deoxyribonucleoside 5'-diphosphate + ATP = a 2'-deoxyribonucleoside 5'-triphosphate + ADP. It carries out the reaction a ribonucleoside 5'-diphosphate + ATP = a ribonucleoside 5'-triphosphate + ADP. Functionally, major role in the synthesis of nucleoside triphosphates other than ATP. The ATP gamma phosphate is transferred to the NDP beta phosphate via a ping-pong mechanism, using a phosphorylated active-site intermediate. This Ruegeria pomeroyi (strain ATCC 700808 / DSM 15171 / DSS-3) (Silicibacter pomeroyi) protein is Nucleoside diphosphate kinase.